Consider the following 161-residue polypeptide: Small ribosomal subunit protein uS15 (161 aa).

The segment covering 1 to 13 (MAGKRRKKGRSHS) has biased composition (basic residues). The segment at 1–22 (MAGKRRKKGRSHSTRPATPTVP) is disordered.

It belongs to the universal ribosomal protein uS15 family. In terms of assembly, part of the 30S ribosomal subunit.

This chain is Small ribosomal subunit protein uS15, found in Hyperthermus butylicus (strain DSM 5456 / JCM 9403 / PLM1-5).